A 143-amino-acid chain; its full sequence is Ribonuclease P protein component 2 (143 aa).

Belongs to the eukaryotic/archaeal RNase P protein component 2 family. Consists of a catalytic RNA component and at least 4-5 protein subunits.

Its subcellular location is the cytoplasm. It catalyses the reaction Endonucleolytic cleavage of RNA, removing 5'-extranucleotides from tRNA precursor.. In terms of biological role, part of ribonuclease P, a protein complex that generates mature tRNA molecules by cleaving their 5'-ends. The sequence is that of Ribonuclease P protein component 2 from Saccharolobus islandicus (strain Y.N.15.51 / Yellowstone #2) (Sulfolobus islandicus).